The sequence spans 411 residues: Arginine deiminase (411 aa).

Residue C401 is the Amidino-cysteine intermediate of the active site.

It belongs to the arginine deiminase family.

It localises to the cytoplasm. The catalysed reaction is L-arginine + H2O = L-citrulline + NH4(+). The protein operates within amino-acid degradation; L-arginine degradation via ADI pathway; carbamoyl phosphate from L-arginine: step 1/2. This is Arginine deiminase from Streptococcus pyogenes serotype M49 (strain NZ131).